Here is a 118-residue protein sequence, read N- to C-terminus: NADH-ubiquinone oxidoreductase chain 3 (118 aa).

3 helical membrane-spanning segments follow: residues 5 to 25, 62 to 82, and 87 to 107; these read YIYI…LIFL, LIAI…PWSI, and GSFF…VGFI.

The protein belongs to the complex I subunit 3 family.

It is found in the mitochondrion membrane. The catalysed reaction is a ubiquinone + NADH + 5 H(+)(in) = a ubiquinol + NAD(+) + 4 H(+)(out). Core subunit of the mitochondrial membrane respiratory chain NADH dehydrogenase (Complex I) that is believed to belong to the minimal assembly required for catalysis. Complex I functions in the transfer of electrons from NADH to the respiratory chain. The immediate electron acceptor for the enzyme is believed to be ubiquinone. In Acanthamoeba castellanii (Amoeba), this protein is NADH-ubiquinone oxidoreductase chain 3 (ND3).